Here is a 127-residue protein sequence, read N- to C-terminus: PanD regulatory factor (127 aa).

The region spanning 1–127 is the N-acetyltransferase domain; that stretch reads MKLTIIRLEK…TAQQGGWEKC (127 aa). Interaction with PanD stretches follow at residues 43-48 and 66-76; these read RFNERL and LRVREVTRRRG. CoA-binding positions include 66–68 and 72–79; these read LRV and TRRRGVGQ.

The protein belongs to the PanZ/PanM family. In terms of assembly, interacts with PanD in the presence of CoA. Forms a heterooctameric complex composed of four PanD subunits and four PanZ subunits. Monomer in solution.

With respect to regulation, activation of PanD processing occurs even at low CoA concentrations. In contrast, full inhibition of PanD catalytic activity only occurs at sufficiently high CoA concentrations. In terms of biological role, controls both the activation and catalytic activity of PanD in a coenzyme A (CoA)-dependent fashion. Binding of CoA or a derivative to PanZ leads to interaction with PanD, which promotes the processing and activation of pro-PanD, and subsequent substrate-mediated inhibition of the active form of PanD. Inhibition of PanD activity is probably the primary metabolic role of PanZ, allowing negative feedback regulation of pantothenate biosynthesis by CoA. The protein is PanD regulatory factor of Escherichia coli (strain K12).